Consider the following 141-residue polypeptide: Large ribosomal subunit protein uL11 (141 aa).

This sequence belongs to the universal ribosomal protein uL11 family. In terms of assembly, part of the ribosomal stalk of the 50S ribosomal subunit. Interacts with L10 and the large rRNA to form the base of the stalk. L10 forms an elongated spine to which L12 dimers bind in a sequential fashion forming a multimeric L10(L12)X complex. In terms of processing, one or more lysine residues are methylated.

Forms part of the ribosomal stalk which helps the ribosome interact with GTP-bound translation factors. The sequence is that of Large ribosomal subunit protein uL11 from Chlorobium phaeobacteroides (strain DSM 266 / SMG 266 / 2430).